A 557-amino-acid polypeptide reads, in one-letter code: Alpha-glucosidase (557 aa).

Asp201 (nucleophile) is an active-site residue. Glu256 acts as the Proton donor in catalysis.

Belongs to the glycosyl hydrolase 13 family.

The catalysed reaction is Hydrolysis of terminal, non-reducing (1-&gt;4)-linked alpha-D-glucose residues with release of alpha-D-glucose.. The polypeptide is Alpha-glucosidase (agl) (Pediococcus pentosaceus).